The following is a 121-amino-acid chain: Griffithsin (121 aa).

In terms of domain architecture, Jacalin-type lectin spans 1 to 120 (SLTHRKFGGS…LDSLDIYYEQ (120 aa)).

Mixed specificity lectin with anti-HIV activity. Binds to HIV envelope glycoproteins, including exterior membrane glycoprotein gp120, and inhibits viral entry into cells. Binding to gp120 is dependent on gp120 being glycosylated, and is inhibited by mannose, glucose and N-acetylglucosamine. This Griffithsia sp. (strain Q66D336) (Red alga) protein is Griffithsin.